Here is a 610-residue protein sequence, read N- to C-terminus: Replication factor C large subunit (610 aa).

55–62 (GPAGIGKT) contacts ATP. 3 stretches are compositionally biased toward basic and acidic residues: residues 467–478 (EKEGNASAEKPE), 502–515 (LPEKKRSSEMKLPE), and 594–603 (DGSKKAEPKN). The interval 467–610 (EKEGNASAEK…PKNQKTLFDF (144 aa)) is disordered.

The protein belongs to the activator 1 small subunits family. RfcL subfamily. As to quaternary structure, heteromultimer composed of small subunits (RfcS) and large subunits (RfcL).

Its function is as follows. Part of the RFC clamp loader complex which loads the PCNA sliding clamp onto DNA. This is Replication factor C large subunit from Methanosarcina mazei (strain ATCC BAA-159 / DSM 3647 / Goe1 / Go1 / JCM 11833 / OCM 88) (Methanosarcina frisia).